The chain runs to 245 residues: Dehydrogenase/reductase SDR family member 6 (245 aa).

NAD(+)-binding positions include 16–18 (QGI), D37, and D58. R144 is a substrate binding site. Y147 serves as the catalytic Proton acceptor. Residues K151 and 180–184 (VDTPS) each bind NAD(+). 2 residues coordinate substrate: R188 and R205.

Belongs to the short-chain dehydrogenases/reductases (SDR) family. Homotetramer.

Its subcellular location is the cytoplasm. The catalysed reaction is cis-4-hydroxy-L-proline + NAD(+) = 4-oxo-L-proline + NADH + H(+). The enzyme catalyses (R)-3-hydroxybutanoate + NAD(+) = acetoacetate + NADH + H(+). It participates in amino-acid metabolism. Its pathway is siderophore biosynthesis. NAD(H)-dependent dehydrogenase/reductase with a preference for cyclic substrates. Catalyzes stereoselective conversion of 4-oxo-L-proline to cis-4-hydroxy-L-proline, likely a detoxification mechanism for ketoprolines. Mediates the formation of 2,5-dihydroxybenzoate (2,5-DHBA), a siderophore that chelates free cytoplasmic iron, thereby regulating iron transport and homeostasis while protecting cells against free radical-induced oxidative stress. The iron-siderophore complex is imported into mitochondria, providing an iron source for mitochondrial metabolic processes in particular heme synthesis. May act as a 3-hydroxybutyrate dehydrogenase. The chain is Dehydrogenase/reductase SDR family member 6 (bdh2) from Aquarana catesbeiana (American bullfrog).